Reading from the N-terminus, the 196-residue chain is Purpurin (196 aa).

A signal peptide spans 1 to 21 (MKYAQYVFLASIFSAVEYSLA). 3 cysteine pairs are disulfide-bonded: cysteine 24–cysteine 182, cysteine 90–cysteine 196, and cysteine 142–cysteine 151.

It belongs to the calycin superfamily. Lipocalin family.

It localises to the secreted. Its subcellular location is the extracellular space. The protein localises to the extracellular matrix. It is found in the interphotoreceptor matrix. Functionally, may be involved in the transport of retinol between the photoreceptors and the pigmented epithelium. The polypeptide is Purpurin (Gallus gallus (Chicken)).